A 346-amino-acid chain; its full sequence is Putative D-xylulose reductase (346 aa).

Zn(2+) contacts are provided by C39, H64, and E150.

The protein belongs to the zinc-containing alcohol dehydrogenase family. Zn(2+) is required as a cofactor.

It catalyses the reaction xylitol + NAD(+) = D-xylulose + NADH + H(+). This Rhizobium meliloti (strain 1021) (Ensifer meliloti) protein is Putative D-xylulose reductase.